A 699-amino-acid polypeptide reads, in one-letter code: Zinc finger protein 782 (699 aa).

A KRAB domain is found at 8–79; the sequence is VSFQDVTVEF…EKEKGFLSRN (72 aa). The interval 75-95 is disordered; the sequence is FLSRNSPEDSQPDEISEKSPE. Residues 279–307 form a C2H2-type 1; degenerate zinc finger; sequence CFCRITHKTLTGGKSFSQKSHIREHHRVH. The C2H2-type 2; degenerate zinc-finger motif lies at 316 to 332; that stretch reads GKSFNRNSTLPVHQRTH. A C2H2-type 3; degenerate zinc finger spans residues 337–360; that stretch reads YSDYHPCTETFSYQSTFSVHQKVH. A C2H2-type 4; degenerate zinc finger spans residues 366–388; that stretch reads YEYNECGKSCSMNSHLIWPQKSH. 11 C2H2-type zinc fingers span residues 394-416, 422-444, 450-472, 478-500, 506-528, 534-556, 562-584, 590-612, 618-640, 646-668, and 674-696; these read YECP…QRTH, YKCD…QRTH, FECH…QRTH, FECN…RRTH, YKCD…HRTH, YKCN…HRIH, YKCN…HRTH, YQCE…QRTH, YECN…QRTH, YNCN…QRTH, and YKCD…QKAH.

Belongs to the krueppel C2H2-type zinc-finger protein family.

The protein resides in the nucleus. In terms of biological role, may be involved in transcriptional regulation. The sequence is that of Zinc finger protein 782 (ZNF782) from Homo sapiens (Human).